We begin with the raw amino-acid sequence, 137 residues long: Nucleoside diphosphate kinase (137 aa).

ATP-binding residues include K9, F57, R85, T91, R102, and N112. Residue H115 is the Pros-phosphohistidine intermediate of the active site.

Belongs to the NDK family. Homotetramer. The cofactor is Mg(2+).

The protein resides in the cytoplasm. The catalysed reaction is a 2'-deoxyribonucleoside 5'-diphosphate + ATP = a 2'-deoxyribonucleoside 5'-triphosphate + ADP. The enzyme catalyses a ribonucleoside 5'-diphosphate + ATP = a ribonucleoside 5'-triphosphate + ADP. Major role in the synthesis of nucleoside triphosphates other than ATP. The ATP gamma phosphate is transferred to the NDP beta phosphate via a ping-pong mechanism, using a phosphorylated active-site intermediate. The polypeptide is Nucleoside diphosphate kinase (Sulfurimonas denitrificans (strain ATCC 33889 / DSM 1251) (Thiomicrospira denitrificans (strain ATCC 33889 / DSM 1251))).